We begin with the raw amino-acid sequence, 429 residues long: Enolase (429 aa).

Q167 contributes to the (2R)-2-phosphoglycerate binding site. The active-site Proton donor is E209. Residues D246, E289, and D316 each contribute to the Mg(2+) site. 4 residues coordinate (2R)-2-phosphoglycerate: K341, R370, S371, and K392. K341 serves as the catalytic Proton acceptor.

Belongs to the enolase family. As to quaternary structure, component of the RNA degradosome, a multiprotein complex involved in RNA processing and mRNA degradation. It depends on Mg(2+) as a cofactor.

It localises to the cytoplasm. The protein resides in the secreted. The protein localises to the cell surface. The enzyme catalyses (2R)-2-phosphoglycerate = phosphoenolpyruvate + H2O. The protein operates within carbohydrate degradation; glycolysis; pyruvate from D-glyceraldehyde 3-phosphate: step 4/5. Functionally, catalyzes the reversible conversion of 2-phosphoglycerate (2-PG) into phosphoenolpyruvate (PEP). It is essential for the degradation of carbohydrates via glycolysis. The chain is Enolase from Ectopseudomonas mendocina (strain ymp) (Pseudomonas mendocina).